The chain runs to 391 residues: Putative gustatory receptor 36a (391 aa).

Topologically, residues 1–3 (MFD) are cytoplasmic. Residues 4–24 (WVGLLLKVLYYYGQIIGLINF) form a helical membrane-spanning segment. Residues 25–38 (EIDWQRGRVVAAQR) lie on the Extracellular side of the membrane. The chain crosses the membrane as a helical span at residues 39-59 (GILFAIAINVLICMVLLLQIS). At 60–73 (KKFNLDVYFGRANQ) the chain is on the cytoplasmic side. A helical membrane pass occupies residues 74–94 (LHQYVIIVMVSLRMASGISAI). Over 95–126 (LNRWRQRAQLMRLVECVLRLFLKKPHVKQMSR) the chain is Extracellular. Residues 127–147 (WAILVKFSVGVVSNFLQMAIS) form a helical membrane-spanning segment. At 148–165 (MESLDRLGFNEFVGMASD) the chain is on the cytoplasmic side. A helical transmembrane segment spans residues 166-186 (FWMSAIINMAISQHYLVILFV). Over 187–247 (RAYYHLLKTE…LQSIVTQLNQ (61 aa)) the chain is Extracellular. The chain crosses the membrane as a helical span at residues 248 to 268 (VFGIQGIMVYGGYYIFSVATT). The Cytoplasmic segment spans residues 269–290 (YITYSLAINGIEELHLSVRAAA). The chain crosses the membrane as a helical span at residues 291 to 311 (LVFSWFLFYYTSAILNLFVML). The Extracellular segment spans residues 312–391 (KLFDDHKEME…FLIQYDMEYF (80 aa)).

Belongs to the insect chemoreceptor superfamily. Gustatory receptor (GR) family. Gr22e subfamily.

It localises to the cell membrane. Functionally, probable gustatory receptor which mediates acceptance or avoidance behavior, depending on its substrates. In Drosophila melanogaster (Fruit fly), this protein is Putative gustatory receptor 36a (Gr36a).